A 504-amino-acid chain; its full sequence is Putative glycerol-3-phosphate transporter 2 (504 aa).

12 consecutive transmembrane segments (helical) span residues 31–51 (LSFKQYQALVFILTFVAYIAF), 84–104 (ALLGQIDLAFLSVYAVGMFVA), 116–136 (FLTIGMIGTGLFTALFGVAFW), 145–165 (FLAVQVMAGLFQSIGWPCIVA), 178–198 (MIMGVWSAHTSLGNIAGSLIA), 210–230 (FLGPAFLMTFLGIVVYLFLPV), 280–302 (IPGVAPFAFCLFFTKLVSYTFLY), 324–344 (GNLSTIFDVGGVVGGVLAGYI), 352–372 (AITAAGFMYLAIPALFLYRVF), 378–398 (TINVILMFTSGVFIIGPFALI), 424–444 (AIIDGTGSVGAAIGPVLTGYI), and 452–472 (VFYMLMTAALISGLLLTKLII).

It belongs to the major facilitator superfamily. Organophosphate:Pi antiporter (OPA) (TC 2.A.1.4) family. As to expression, expressed in the root-hair differentiation zone.

The protein localises to the membrane. The protein is Putative glycerol-3-phosphate transporter 2 of Arabidopsis thaliana (Mouse-ear cress).